A 589-amino-acid polypeptide reads, in one-letter code: Kelch-like protein 25 (589 aa).

Residues 46 to 114 (TDVTLWAGDR…AYSSRIAINE (69 aa)) enclose the BTB domain. The BACK domain occupies 149–250 (CLGMMLLSDA…LPSDCLQEAV (102 aa)). Kelch repeat units lie at residues 296–340 (TLLI…AIGC), 341–388 (KVYV…ELEN), 389–444 (CLYV…SAKL), 446–492 (LFVF…VLGS), 494–538 (IFIM…ASGN), and 539–585 (KLYV…STWK).

In terms of assembly, component of the BCR(KLHL25) E3 ubiquitin ligase complex, at least composed of CUL3, KLHL25 and RBX1.

It functions in the pathway protein modification; protein ubiquitination. Its function is as follows. Substrate-specific adapter of a BCR (BTB-CUL3-RBX1) E3 ubiquitin ligase complex involved in various processes, such as translation homeostasis and lipid synthesis. The BCR(KLHL25) ubiquitin ligase complex acts by mediating ubiquitination of hypophosphorylated EIF4EBP1 (4E-BP1): ubiquitination and subsequent degradation of hypophosphorylated EIF4EBP1 (4E-BP1) probably serves as a homeostatic mechanism to maintain translation and prevent eIF4E inhibition when eIF4E levels are low. The BCR(KLHL25) complex does not target EIF4EBP1 (4E-BP1) when it is hyperphosphorylated or associated with eIF4E. The BCR(KLHL25) complex also acts as a regulator of lipid synthesis by mediating ubiquitination and degradation of ACLY, thereby inhibiting lipid synthesis. BCR(KLHL25)-mediated degradation of ACLY promotes fatty acid oxidation and is required for differentiation of inducible regulatory T (iTreg) cells. The polypeptide is Kelch-like protein 25 (Homo sapiens (Human)).